The sequence spans 182 residues: Phospholipase A2 inhibitor gamma subunit A (182 aa).

8 disulfide bridges follow: Cys-3-Cys-27, Cys-6-Cys-13, Cys-20-Cys-48, Cys-54-Cys-75, Cys-76-Cys-81, Cys-99-Cys-124, Cys-117-Cys-146, and Cys-150-Cys-172. The N-linked (GlcNAc...) asparagine glycan is linked to Asn-157.

Belongs to the CNF-like-inhibitor family. Heterotrimer of 2 subunits A and 1 subunit B. Post-translationally, N-glycosylation is not important for activity, since deglycosylation does not change its PLA2 inhibitory activity. In terms of tissue distribution, expressed by the liver.

The protein resides in the secreted. Strongly inhibits its own venom PLA2 and all other PLA2s tested including Elapid, Crotalid and Viperid venom PLA2s, as well as honeybee PLA2s. The polypeptide is Phospholipase A2 inhibitor gamma subunit A (Laticauda semifasciata (Black-banded sea krait)).